A 138-amino-acid chain; its full sequence is Large ribosomal subunit protein uL16 (138 aa).

A compositionally biased stretch (basic residues) spans 1–17; that stretch reads MLIPRKVKHRKQHHPKQ. The tract at residues 1 to 24 is disordered; the sequence is MLIPRKVKHRKQHHPKQRGIASGG.

The protein belongs to the universal ribosomal protein uL16 family. Part of the 50S ribosomal subunit.

Binds 23S rRNA and is also seen to make contacts with the A and possibly P site tRNAs. This chain is Large ribosomal subunit protein uL16, found in Mycolicibacterium vanbaalenii (strain DSM 7251 / JCM 13017 / BCRC 16820 / KCTC 9966 / NRRL B-24157 / PYR-1) (Mycobacterium vanbaalenii).